A 143-amino-acid chain; its full sequence is Large ribosomal subunit protein uL11 (143 aa).

This sequence belongs to the universal ribosomal protein uL11 family. As to quaternary structure, part of the ribosomal stalk of the 50S ribosomal subunit. Interacts with L10 and the large rRNA to form the base of the stalk. L10 forms an elongated spine to which L12 dimers bind in a sequential fashion forming a multimeric L10(L12)X complex. In terms of processing, one or more lysine residues are methylated.

In terms of biological role, forms part of the ribosomal stalk which helps the ribosome interact with GTP-bound translation factors. This chain is Large ribosomal subunit protein uL11, found in Bifidobacterium longum subsp. infantis (strain ATCC 15697 / DSM 20088 / JCM 1222 / NCTC 11817 / S12).